Reading from the N-terminus, the 990-residue chain is Sister chromatid cohesion protein PDS5 homolog E (990 aa).

HEAT repeat units follow at residues D31 to K57, A58 to P96, D153 to E190, E191 to C228, and P232 to V269. The disordered stretch occupies residues T262–N565. The segment covering N267–S281 has biased composition (basic and acidic residues). Basic residues predominate over residues K302–T314. 2 stretches are compositionally biased toward polar residues: residues E328 to S342 and V394 to R410. 3 stretches are compositionally biased toward basic and acidic residues: residues T421–V430, P448–D477, and V503–S512. The Nuclear localization signal 1 signature appears at V458 to I465. 2 consecutive short sequence motifs (nuclear localization signal) follow at residues T539 to P546 and D583 to V590. The tract at residues K653–Q966 is disordered. Residues V662–S673 are compositionally biased toward low complexity. 2 short sequence motifs (nuclear localization signal) span residues M677–T684 and L715–P722. Residues G727–K742 are compositionally biased toward basic residues. Positions D746–D760 are enriched in acidic residues. Basic and acidic residues-rich tracts occupy residues S761 to G810, T819 to N890, and E898 to T947.

This sequence belongs to the PDS5 family. As to quaternary structure, interacts with the cohesin complex.

The protein localises to the nucleus. Cohesin cofactor dispensable during the meiotic division but playing an important role in DNA repair by homologous recombination (HR) probably by helping SMC5/SMC6 complex. Regulator of sister chromatid cohesion in mitosis which may stabilize cohesin complex association with chromatin. May couple sister chromatid cohesion during mitosis to DNA replication. Cohesion ensures that chromosome partitioning is accurate in both meiotic and mitotic cells and plays an important role in DNA repair. The sequence is that of Sister chromatid cohesion protein PDS5 homolog E from Arabidopsis thaliana (Mouse-ear cress).